Here is a 199-residue protein sequence, read N- to C-terminus: V-set and transmembrane domain-containing protein 5 (199 aa).

An N-terminal signal peptide occupies residues 1 to 27 (MRPPRCVGRTQGIPLGLLAFWVATARC). Residues 28-146 (LQSQGVSLYI…VSEIRYEDLH (119 aa)) lie on the Extracellular side of the membrane. The Ig-like C2-type domain maps to 36–138 (YIPRSAINAT…QSGTILLHVS (103 aa)). N-linked (GlcNAc...) asparagine glycosylation is found at asparagine 43, asparagine 87, and asparagine 101. Residues 147-167 (FVAVFFALLAAVAVVLISLMW) form a helical membrane-spanning segment. Residues 168-199 (VCNQCAYKFQRKRRYKLRESTTEEIEMKDVEC) are Cytoplasmic-facing. Residues 169-185 (CNQCAYKFQRKRRYKLR) form an important for CDC42-dependent filopodia induction region.

Can homooligomerize through cis interactions within the same cell membrane. Post-translationally, N-glycosylated.

It is found in the cell membrane. It localises to the cell projection. Its subcellular location is the dendrite. The protein resides in the axon. In terms of biological role, cell adhesion-like membrane protein of the central nervous system (CNS) which modulates both the position and complexity of central neurons by altering their membrane morphology and dynamics. Involved in the formation of neuronal dendrites and protrusions including dendritic filopodia. In synaptogenesis, regulates synapse formation by altering dendritic spine morphology and actin distribution. Promotes formation of unstable neuronal spines such as thin and branched types. Regulates neuronal morphogenesis and migration during cortical development in the brain. The polypeptide is V-set and transmembrane domain-containing protein 5 (Vstm5) (Rattus norvegicus (Rat)).